Consider the following 389-residue polypeptide: MSRSVLVLNSGSSSVKYAVLEPDSGVLVADGIVERIGEEGAERAVTDHAAAMQVVFDSLASDGHRLDDLGLVAVGHRVVHGGQDLYRPTVVDDATIARLKELSPLAPLHNPPAILGIEVARKALPDLPHVAVFDTAFFHDLPPAAATYAIDAEVAGSWHIRRYGFHGTSHQYVSEQAAAFLNVPLESLSQIVLHLGNGASASAILGGRPVETSMGLTPMEGLVMGTRSGDVDPGVIFYLWRTAGMSVEDIEAMLNRRSGVRGLGGEIDFRVLHQRIESGDAAAQLAYDVYIHRLRKYVGAYLATLGSVDVITFTAGVGENDAAVRRDVLSGLTAFGIELDEHLNASPARTARRISPDGAPITVLVVPTNEELAIARACAGVLGGRLGHG.

N9 is a Mg(2+) binding site. K16 is an ATP binding site. A substrate-binding site is contributed by R77. The Proton donor/acceptor role is filled by D134. Residues 194–198 (HLGNG), 268–270 (DFR), and 316–320 (GVGEN) contribute to the ATP site. A Mg(2+)-binding site is contributed by E370.

This sequence belongs to the acetokinase family. In terms of assembly, homodimer. The cofactor is Mg(2+). Mn(2+) is required as a cofactor.

The protein localises to the cytoplasm. It carries out the reaction acetate + ATP = acetyl phosphate + ADP. It participates in metabolic intermediate biosynthesis; acetyl-CoA biosynthesis; acetyl-CoA from acetate: step 1/2. Functionally, catalyzes the formation of acetyl phosphate from acetate and ATP. Can also catalyze the reverse reaction. This is Acetate kinase from Mycolicibacterium vanbaalenii (strain DSM 7251 / JCM 13017 / BCRC 16820 / KCTC 9966 / NRRL B-24157 / PYR-1) (Mycobacterium vanbaalenii).